The primary structure comprises 156 residues: U4/U6.U5 small nuclear ribonucleoprotein 27 kDa protein (156 aa).

Residues 1-98 (MGRSRSRSPE…IAAEDLEGKT (98 aa)) are disordered. Residues 13-59 (RERRRSRSASRERERRRRERSRSRERRRSRSRSPHRRRSRSPRRHRS) are compositionally biased toward basic residues. A compositionally biased stretch (basic and acidic residues) spans 66–98 (RLKDRRDDDKKDSKESKGAKERQIAAEDLEGKT).

The protein belongs to the SNUT3 family. Part of a tri-snRNP complex.

Its subcellular location is the nucleus. In terms of biological role, may play a role in mRNA splicing. In Xenopus tropicalis (Western clawed frog), this protein is U4/U6.U5 small nuclear ribonucleoprotein 27 kDa protein (snrnp27).